Consider the following 342-residue polypeptide: Endoplasmic reticulum junction formation protein lunapark-1 (342 aa).

Residues 1-39 (MGNLFSRNKSPATELERVALSIDDLKKRLQTISSSNTNT) lie on the Cytoplasmic side of the membrane. Residues 13 to 34 (TELERVALSIDDLKKRLQTISS) adopt a coiled-coil conformation. A helical membrane pass occupies residues 40 to 60 (LYYYYMSIVVILSIAMAHTWL). Residues 61–68 (RFEDPQKT) lie on the Lumenal side of the membrane. The chain crosses the membrane as a helical span at residues 69–89 (YVACALMLGAIGIVLAGRYVI). The Cytoplasmic portion of the chain corresponds to 90–342 (NGFFSWRTNR…ESKTMETEFH (253 aa)). Positions 102–136 (QKLENAISQKTTLLDLVKETLKFKEAKEILDRYEK) form a coiled coil. The segment at 161–191 (ADSSMFATPKQEQKRVETPTAQGPNSAMNSM) is disordered. The span at 179–191 (PTAQGPNSAMNSM) shows a compositional bias: polar residues. The C4-type; plays a role in ER morphology zinc-finger motif lies at 236 to 261 (CSICHTHNGMSTPAEYPYISFRCFEC). The interval 278–342 (RPPMGPKGIQ…ESKTMETEFH (65 aa)) is disordered. A compositionally biased stretch (polar residues) spans 295-321 (SENTHNMMENQKPSTDLTPSASQNGSE). Residues 322–342 (KGSDSENEKVPESKTMETEFH) are compositionally biased toward basic and acidic residues.

It belongs to the lunapark family. In terms of tissue distribution, expressed in cell bodies along the ventral cord around the pharynx and the tail both in larvae and adults. Also expressed in muscles and hypodermal cells.

Its subcellular location is the endoplasmic reticulum membrane. In terms of biological role, plays a role in tubular endoplasmic reticulum network formation and maintenance. May be involved in central nervous system development. Has a presynaptic role in neurotransmission. Likely to operate in synaptogenesis by regulating vesicular transport or localization. Required for correct localization of rab-3 and snb-1. In Caenorhabditis elegans, this protein is Endoplasmic reticulum junction formation protein lunapark-1 (lnp-1).